We begin with the raw amino-acid sequence, 396 residues long: MSKLNAYFGEYGGQFVPQILVPALDQLEQEFIKAQADESFKQEFKELLQEYAGRPTALTKTRNIVKNTKTTLYLKREDLLHGGAHKTNQVLGQALLAKRMGKKEIIAETGAGQHGVATALACALLDLKCRVYMGAKDVERQSPNVFRMKLMGAEVIPVHSGSATLKDACNEALRDWSANYSKAHYLLGTAAGPHPFPTIVREFQRMIGEETKQQILAKEGRLPDAVIACVGGGSNAIGMFADFIDEKNVKLIGVEPAGKGIETGEHGAPLKHGKTGIFFGMKAPLMQNSDGQIEESYSISAGLDFPSVGPQHAHLLAIGRAEYASATDDEALDAFKLLCKKEGIIPALESSHALAHALKLAYEDPNKEQLLVVNLSGRGDKDIFTVHDILKEKGEI.

Lys-86 carries the post-translational modification N6-(pyridoxal phosphate)lysine.

This sequence belongs to the TrpB family. Tetramer of two alpha and two beta chains. Pyridoxal 5'-phosphate serves as cofactor.

It carries out the reaction (1S,2R)-1-C-(indol-3-yl)glycerol 3-phosphate + L-serine = D-glyceraldehyde 3-phosphate + L-tryptophan + H2O. Its pathway is amino-acid biosynthesis; L-tryptophan biosynthesis; L-tryptophan from chorismate: step 5/5. The beta subunit is responsible for the synthesis of L-tryptophan from indole and L-serine. This Francisella tularensis subsp. novicida (strain U112) protein is Tryptophan synthase beta chain.